We begin with the raw amino-acid sequence, 211 residues long: C-type lectin domain family 2 member L (211 aa).

Residues 1 to 53 (MEPAREPPARARPPPPAARPAPAAPRPRSPAEAEARGPEGLLRRSGSGYEGST) form a disordered region. Pro residues predominate over residues 10 to 28 (RARPPPPAARPAPAAPRPR). Serine 29 carries the phosphoserine modification. A helical transmembrane segment spans residues 66 to 86 (LLLGAIAVLLFAILVVMSILA). Cystine bridges form between cysteine 97–cysteine 108, cysteine 125–cysteine 205, and cysteine 184–cysteine 197. A C-type lectin domain is found at 104–206 (YGRKCYYFSE…CLTTRPWVCS (103 aa)).

It localises to the membrane. The protein is C-type lectin domain family 2 member L (Clec2l) of Rattus norvegicus (Rat).